The following is a 348-amino-acid chain: Delta(6)-protoilludene synthase 18 (348 aa).

Mg(2+)-binding residues include Asp87, Asn223, Ser227, and Glu231. A DDXXD motif motif is present at residues 87–91 (DEYTD). Residues 223–231 (NDLVSYNRE) carry the NSE/DTE motif motif. Residues Arg311 and Tyr312 each coordinate (2E,6E)-farnesyl diphosphate.

Belongs to the terpene synthase family. The cofactor is Mg(2+).

It catalyses the reaction (2E,6E)-farnesyl diphosphate = Delta(6)-protoilludene + diphosphate. Terpene cyclase that catalyzes the cyclization of farnesyl diphosphate (FPP) to delta(6)-protoilludene. This Postia placenta (strain ATCC 44394 / Madison 698-R) (Brown rot fungus) protein is Delta(6)-protoilludene synthase 18.